The sequence spans 195 residues: Killer cell lectin-like receptor subfamily G member 1 (195 aa).

Over 1–38 (MTDSVIYSMLELPTATQAQNDYGPQQKSSSSRPSCSCL) the chain is Cytoplasmic. The ITIM motif signature appears at 5-10 (VIYSML). The chain crosses the membrane as a helical; Signal-anchor for type II membrane protein span at residues 39 to 59 (VAIALGLLTAVLLSVLLYQWI). At 60–195 (LCQGSNYSTC…KCPFADQALF (136 aa)) the chain is on the extracellular side. N-linked (GlcNAc...) asparagine glycosylation is present at N65. A disulfide bridge connects residues C75 and C86. One can recognise a C-type lectin domain in the interval 82–185 (YGNHCYYFSV…CEVPLHWVCK (104 aa)). N97, N137, and N150 each carry an N-linked (GlcNAc...) asparagine glycan. 2 cysteine pairs are disulfide-bonded: C103-C184 and C163-C176.

As to quaternary structure, forms a monomer and homodimer; disulfide-linked. Interacts (via ITIM motif) with PTPN11 and INPP5D. Expressed specifically on natural killer (NK) cells and T-cells, mainly CD8 T-cells.

Its subcellular location is the cell membrane. Its function is as follows. Plays an inhibitory role on natural killer (NK) cells and T-cell functions upon binding to their non-MHC ligands. May mediate missing self recognition by binding to a highly conserved site on classical cadherins, enabling it to monitor expression of E-cadherin/CDH1, N-cadherin/CDH2 and R-cadherin/CDH4 on target cells. This Homo sapiens (Human) protein is Killer cell lectin-like receptor subfamily G member 1 (KLRG1).